The chain runs to 53 residues: uncharacterized protein (53 aa).

Residues 26 to 46 form a helical membrane-spanning segment; that stretch reads CYLLFCFLECFLNLFKKCGVF.

This sequence belongs to the plectrovirus ORF11 family.

It is found in the host membrane. This is an uncharacterized protein from Spiroplasma virus SpV1-R8A2 B (SpV1).